A 115-amino-acid polypeptide reads, in one-letter code: MNLSLTLMTDVALALLLVMIAFWLPQLNIYTEKYSSYECGFDPMGSARLPFSMKFFLVAITFLLFDLEIALLLPLPWASQTTNLKLMLTMALLLISILAAGLAYEWSQKGLEWEE.

3 helical membrane-spanning segments follow: residues 5 to 25 (LTLMTDVALALLLVMIAFWLP), 55 to 75 (FFLVAITFLLFDLEIALLLPL), and 86 to 106 (LMLTMALLLISILAAGLAYEW).

This sequence belongs to the complex I subunit 3 family. As to quaternary structure, core subunit of respiratory chain NADH dehydrogenase (Complex I) which is composed of 45 different subunits. Interacts with TMEM186. Interacts with TMEM242.

Its subcellular location is the mitochondrion inner membrane. The enzyme catalyses a ubiquinone + NADH + 5 H(+)(in) = a ubiquinol + NAD(+) + 4 H(+)(out). Functionally, core subunit of the mitochondrial membrane respiratory chain NADH dehydrogenase (Complex I) which catalyzes electron transfer from NADH through the respiratory chain, using ubiquinone as an electron acceptor. Essential for the catalytic activity of complex I. The protein is NADH-ubiquinone oxidoreductase chain 3 of Avahi cleesei (Cleese's woolly lemur).